A 455-amino-acid polypeptide reads, in one-letter code: Putative O-acetyltransferase SAT14 (455 aa).

The protein belongs to the lysine N-acyltransferase MbtK family.

It participates in mycotoxin biosynthesis. In terms of biological role, putative O-acetyltransferase; part of the satratoxin SC2 cluster involved in the biosynthesis of satratoxins, trichothecene mycotoxins that are associated with human food poisonings. Satratoxins are suggested to be made by products of multiple gene clusters (SC1, SC2 and SC3) that encode 21 proteins in all, including polyketide synthases, acetyltransferases, and other enzymes expected to modify the trichothecene skeleton. SC1 encodes 10 proteins, SAT1 to SAT10. The largest are SAT8, which encodes a putative polyketide synthase (PKS) with a conventional non-reducing architecture, and SAT10, a putative protein containing four ankyrin repeats and thus may be involved in protein scaffolding. The putative short-chain reductase SAT3 may assist the PKS in some capacity. SAT6 contains a secretory lipase domain and acts probably as a trichothecene esterase. SAT5 encodes a putative acetyltransferase, and so, with SAT6, may affect endogenous protection from toxicity. The probable transcription factor SAT9 may regulate the expression of the SC1 cluster. SC2 encodes proteins SAT11 to SAT16, the largest of which encodes the putative reducing PKS SAT13. SAT11 is a cytochrome P450 monooxygenase, while SAT14 and SAT16 are probable acetyltransferases. The SC2 cluster may be regulated by the transcription factor SAT15. SC3 is a small cluster that encodes 5 proteins, SAT17 to SAT21. SAT21 is a putative MFS-type transporter which may have a role in exporting secondary metabolites. The four other proteins putatively encoded in SC3 include the taurine hydroxylase-like protein SAT17, the O-methyltransferase SAT18, the acetyltransferase SAT19, and the Cys6-type zinc finger SAT20, the latter being probably involved in regulation of SC3 expression. This is Putative O-acetyltransferase SAT14 from Stachybotrys chartarum (strain CBS 109288 / IBT 7711) (Toxic black mold).